The following is a 593-amino-acid chain: Aspartate--tRNA ligase (593 aa).

Glutamate 180 lines the L-aspartate pocket. Positions 204-207 (QLFK) are aspartate. Arginine 226 contributes to the L-aspartate binding site. Residues 226 to 228 (RDE) and glutamine 235 each bind ATP. Histidine 454 provides a ligand contact to L-aspartate. Glutamate 488 is a binding site for ATP. Arginine 495 contributes to the L-aspartate binding site. Residue 540-543 (GFDR) coordinates ATP.

This sequence belongs to the class-II aminoacyl-tRNA synthetase family. Type 1 subfamily. In terms of assembly, homodimer.

The protein resides in the cytoplasm. It catalyses the reaction tRNA(Asp) + L-aspartate + ATP = L-aspartyl-tRNA(Asp) + AMP + diphosphate. Its function is as follows. Catalyzes the attachment of L-aspartate to tRNA(Asp) in a two-step reaction: L-aspartate is first activated by ATP to form Asp-AMP and then transferred to the acceptor end of tRNA(Asp). This is Aspartate--tRNA ligase from Clostridium novyi (strain NT).